The primary structure comprises 533 residues: GMP synthase [glutamine-hydrolyzing] (533 aa).

Positions 25–215 (SIVIFDFGSQ…VFNICKCHAN (191 aa)) constitute a Glutamine amidotransferase type-1 domain. Residue Cys102 is the Nucleophile of the active site. Active-site residues include His189 and Glu191. The 193-residue stretch at 216–408 (WTMGNYIQES…LGLPDEMIWR (193 aa)) folds into the GMPS ATP-PPase domain. 243 to 249 (SGGVDSA) serves as a coordination point for ATP.

In terms of assembly, homodimer.

The catalysed reaction is XMP + L-glutamine + ATP + H2O = GMP + L-glutamate + AMP + diphosphate + 2 H(+). It functions in the pathway purine metabolism; GMP biosynthesis; GMP from XMP (L-Gln route): step 1/1. Functionally, catalyzes the synthesis of GMP from XMP. In Dehalococcoides mccartyi (strain CBDB1), this protein is GMP synthase [glutamine-hydrolyzing].